The following is a 436-amino-acid chain: Glutamate-1-semialdehyde 2,1-aminomutase 2 (436 aa).

An N6-(pyridoxal phosphate)lysine modification is found at Lys-271.

It belongs to the class-III pyridoxal-phosphate-dependent aminotransferase family. HemL subfamily. Homodimer. Pyridoxal 5'-phosphate is required as a cofactor.

The protein localises to the cytoplasm. It carries out the reaction (S)-4-amino-5-oxopentanoate = 5-aminolevulinate. The protein operates within porphyrin-containing compound metabolism; protoporphyrin-IX biosynthesis; 5-aminolevulinate from L-glutamyl-tRNA(Glu): step 2/2. This chain is Glutamate-1-semialdehyde 2,1-aminomutase 2, found in Exiguobacterium sibiricum (strain DSM 17290 / CCUG 55495 / CIP 109462 / JCM 13490 / 255-15).